Consider the following 183-residue polypeptide: Threonylcarbamoyl-AMP synthase (183 aa).

Residues methionine 1–glycine 183 enclose the YrdC-like domain.

It belongs to the SUA5 family. TsaC subfamily.

It localises to the cytoplasm. It catalyses the reaction L-threonine + hydrogencarbonate + ATP = L-threonylcarbamoyladenylate + diphosphate + H2O. Its function is as follows. Required for the formation of a threonylcarbamoyl group on adenosine at position 37 (t(6)A37) in tRNAs that read codons beginning with adenine. Catalyzes the conversion of L-threonine, HCO(3)(-)/CO(2) and ATP to give threonylcarbamoyl-AMP (TC-AMP) as the acyladenylate intermediate, with the release of diphosphate. The polypeptide is Threonylcarbamoyl-AMP synthase (Histophilus somni (strain 129Pt) (Haemophilus somnus)).